A 170-amino-acid chain; its full sequence is Urease accessory protein UreE (170 aa).

The protein belongs to the UreE family.

The protein localises to the cytoplasm. In terms of biological role, involved in urease metallocenter assembly. Binds nickel. Probably functions as a nickel donor during metallocenter assembly. In Helicobacter pylori (strain Shi470), this protein is Urease accessory protein UreE.